Reading from the N-terminus, the 187-residue chain is Troponin I, slow skeletal muscle (187 aa).

The residue at position 2 (Pro-2) is an N-acetylproline. The tract at residues 2 to 48 is involved in binding TNC; sequence PEVERKPKITASRKLLLKSLMLAKAKECWEQEHEEREAEKVRYLAER. At Ser-58 the chain carries Phosphoserine. Residues 97 to 118 are involved in binding TNC and actin; the sequence is LKLKVMDLRGKFKRPPLRRVRV.

Belongs to the troponin I family. As to quaternary structure, binds to actin and tropomyosin. Highest levels observed in human skeletal muscle (e.g. gastrocnemious muscle), differentiated cultures of primary human muscle cells and rhabdomyosarcoma cells cultured in low serum medium. Expressed in C2 muscle cell myoblasts and myotubes.

Troponin I is the inhibitory subunit of troponin, the thin filament regulatory complex which confers calcium-sensitivity to striated muscle actomyosin ATPase activity. This Homo sapiens (Human) protein is Troponin I, slow skeletal muscle (TNNI1).